The following is a 275-amino-acid chain: Translation initiation factor 2 subunit alpha (275 aa).

The S1 motif domain maps to 12 to 83; the sequence is GEFVVATVKN…EKGHIDLSLK (72 aa).

It belongs to the eIF-2-alpha family. In terms of assembly, heterotrimer composed of an alpha, a beta and a gamma chain.

Functionally, eIF-2 functions in the early steps of protein synthesis by forming a ternary complex with GTP and initiator tRNA. The sequence is that of Translation initiation factor 2 subunit alpha from Thermococcus kodakarensis (strain ATCC BAA-918 / JCM 12380 / KOD1) (Pyrococcus kodakaraensis (strain KOD1)).